Reading from the N-terminus, the 179-residue chain is Transcription initiation factor TFIID subunit 10 (179 aa).

A disordered region spans residues 1–23; the sequence is MNDPEQYEPSSSTESVLMPPPAL.

This sequence belongs to the TAF10 family. As to quaternary structure, component of the TFIID basal transcription factor complex, composed of TATA-box-binding protein tbp-1, and a number of TBP-associated factors (TAFs).

It is found in the nucleus. Its function is as follows. The TFIID basal transcription factor complex plays a major role in the initiation of RNA polymerase II (Pol II)-dependent transcription. TFIID recognizes and binds promoters via its subunit tbp-1, a TATA-box-binding protein, and promotes assembly of the pre-initiation complex (PIC). The TFIID complex consists of tbp-1 and TBP-associated factors (TAFs), including taf-10. Essential for early embryonic development, but not required for transcription of some genes; probably acts via activating transcription initiation by RNA Pol II, as part of the TFIID complex. The chain is Transcription initiation factor TFIID subunit 10 from Caenorhabditis elegans.